Reading from the N-terminus, the 160-residue chain is NADH-quinone oxidoreductase subunit I (160 aa).

4Fe-4S ferredoxin-type domains lie at 51–80 (RRYKNGEERCIACKLCEVVCPAQAITIEAA) and 91–120 (TKYDIDMTKCIYCGFCQEACPVDAIVEGPN). 8 residues coordinate [4Fe-4S] cluster: cysteine 60, cysteine 63, cysteine 66, cysteine 70, cysteine 100, cysteine 103, cysteine 106, and cysteine 110.

Belongs to the complex I 23 kDa subunit family. As to quaternary structure, NDH-1 is composed of 14 different subunits. Subunits NuoA, H, J, K, L, M, N constitute the membrane sector of the complex. The cofactor is [4Fe-4S] cluster.

The protein localises to the cell inner membrane. It catalyses the reaction a quinone + NADH + 5 H(+)(in) = a quinol + NAD(+) + 4 H(+)(out). Functionally, NDH-1 shuttles electrons from NADH, via FMN and iron-sulfur (Fe-S) centers, to quinones in the respiratory chain. The immediate electron acceptor for the enzyme in this species is believed to be ubiquinone. Couples the redox reaction to proton translocation (for every two electrons transferred, four hydrogen ions are translocated across the cytoplasmic membrane), and thus conserves the redox energy in a proton gradient. The protein is NADH-quinone oxidoreductase subunit I of Neorickettsia sennetsu (strain ATCC VR-367 / Miyayama) (Ehrlichia sennetsu).